Reading from the N-terminus, the 91-residue chain is Large ribosomal subunit protein uL23c (91 aa).

This sequence belongs to the universal ribosomal protein uL23 family. Part of the 50S ribosomal subunit.

It localises to the plastid. The protein localises to the chloroplast. Functionally, binds to 23S rRNA. The polypeptide is Large ribosomal subunit protein uL23c (rpl23) (Physcomitrium patens (Spreading-leaved earth moss)).